Here is a 215-residue protein sequence, read N- to C-terminus: Cytidylate kinase (215 aa).

Residue 10 to 18 (GPAAAGKST) coordinates ATP.

It belongs to the cytidylate kinase family. Type 1 subfamily.

The protein resides in the cytoplasm. It catalyses the reaction CMP + ATP = CDP + ADP. It carries out the reaction dCMP + ATP = dCDP + ADP. The chain is Cytidylate kinase from Staphylococcus epidermidis (strain ATCC 35984 / DSM 28319 / BCRC 17069 / CCUG 31568 / BM 3577 / RP62A).